The sequence spans 400 residues: Tektin-B1 (400 aa).

Coiled coils occupy residues 35-81, 236-294, and 310-353; these read TRLS…AKAL, FALR…LENR, and GLVN…LELK.

This sequence belongs to the tektin family. May form a heterodimer with tektin a or exist as a homodimer. Cilia and flagella.

It is found in the cytoplasm. The protein resides in the cytoskeleton. Structural component of ciliary and flagellar microtubules. This Strongylocentrotus purpuratus (Purple sea urchin) protein is Tektin-B1.